A 619-amino-acid chain; its full sequence is ATP-dependent RNA helicase DBP8 (619 aa).

Residues 1–149 (MAVSKKSRKS…NGLPSASKPS (149 aa)) form a disordered region. A compositionally biased stretch (acidic residues) spans 46–67 (EGNDESDEEDDDVSNEGEDEGE). Residues 68-78 (SSGSEAESSVA) are compositionally biased toward low complexity. Over residues 93-105 (LDAEGEEDKENEE) the composition is skewed to acidic residues. Residues 137–147 (PQPNGLPSASK) are compositionally biased toward polar residues. The short motif at 152–180 (VTFESLGLSRPLITALASINIKKPTEIQA) is the Q motif element. The Helicase ATP-binding domain maps to 183 to 356 (VEPILSGRDC…NKEPPAGKQR (174 aa)). 196–203 (AKTGSGKT) provides a ligand contact to ATP. A DEAD box motif is present at residues 304–307 (DEAD). The interval 414-436 (EREAALGKKGKKPKQAKEEEDAP) is disordered. Positions 430–572 (KEEEDAPSVP…ELKLDEDKVL (143 aa)) constitute a Helicase C-terminal domain.

It belongs to the DEAD box helicase family. DDX49/DBP8 subfamily.

The protein localises to the nucleus. Its subcellular location is the nucleolus. It catalyses the reaction ATP + H2O = ADP + phosphate + H(+). In terms of biological role, ATP-binding RNA helicase involved in 40S ribosomal subunit biogenesis and is required for the normal formation of 18S rRNAs through pre-rRNA processing at A0, A1 and A2 sites. Required for vegetative growth. This is ATP-dependent RNA helicase DBP8 (DBP8) from Cryptococcus neoformans var. neoformans serotype D (strain B-3501A) (Filobasidiella neoformans).